The primary structure comprises 320 residues: uncharacterized protein (320 aa).

Residues 196–273 (VVPEYDFDSE…RSKNNSNTTK (78 aa)) are disordered. The span at 200 to 210 (YDFDSESESDN) shows a compositional bias: acidic residues. Over residues 211–226 (SEEKRFVPVLETEKAP) the composition is skewed to basic and acidic residues. Positions 248–273 (QPKNPKQTTLKNTLDTRSKNNSNTTK) are enriched in polar residues.

This is an uncharacterized protein from Acanthamoeba polyphaga mimivirus (APMV).